We begin with the raw amino-acid sequence, 63 residues long: Large ribosomal subunit protein uL29 (63 aa).

It belongs to the universal ribosomal protein uL29 family.

The chain is Large ribosomal subunit protein uL29 from Vibrio cholerae serotype O1 (strain ATCC 39541 / Classical Ogawa 395 / O395).